The chain runs to 130 residues: DNA-binding protein HU (130 aa).

It belongs to the bacterial histone-like protein family.

Histone-like DNA-binding protein which is capable of wrapping DNA to stabilize it, and thus to prevent its denaturation under extreme environmental conditions. The sequence is that of DNA-binding protein HU (hup) from Ureaplasma parvum serovar 3 (strain ATCC 700970).